The chain runs to 106 residues: MSKTNDWLDFDQLAEDKVRDALKPPSMYKVILVNDDYTPMEFVIDVLQKFFSYDVERATQLMLTVHYQGKAICGVFTAEVAETKVAMVNNYARENEHPLLCTLEKA.

The protein belongs to the ClpS family. Binds to the N-terminal domain of the chaperone ClpA.

In terms of biological role, involved in the modulation of the specificity of the ClpAP-mediated ATP-dependent protein degradation. This Escherichia fergusonii (strain ATCC 35469 / DSM 13698 / CCUG 18766 / IAM 14443 / JCM 21226 / LMG 7866 / NBRC 102419 / NCTC 12128 / CDC 0568-73) protein is ATP-dependent Clp protease adapter protein ClpS.